The primary structure comprises 273 residues: Glutamate racemase (273 aa).

Substrate-binding positions include 9–10 (DS) and 41–42 (YG). Cysteine 73 acts as the Proton donor/acceptor in catalysis. 74–75 (NT) contacts substrate. Catalysis depends on cysteine 183, which acts as the Proton donor/acceptor. 184–185 (TH) contacts substrate.

Belongs to the aspartate/glutamate racemases family.

The enzyme catalyses L-glutamate = D-glutamate. It functions in the pathway cell wall biogenesis; peptidoglycan biosynthesis. Functionally, provides the (R)-glutamate required for cell wall biosynthesis. This is Glutamate racemase from Shewanella sp. (strain ANA-3).